Reading from the N-terminus, the 351-residue chain is Ferrochelatase (351 aa).

Residues histidine 220 and glutamate 301 each coordinate Fe cation.

This sequence belongs to the ferrochelatase family.

The protein resides in the cytoplasm. It carries out the reaction heme b + 2 H(+) = protoporphyrin IX + Fe(2+). It participates in porphyrin-containing compound metabolism; protoheme biosynthesis; protoheme from protoporphyrin-IX: step 1/1. Its function is as follows. Catalyzes the ferrous insertion into protoporphyrin IX. This is Ferrochelatase from Rhodobacter capsulatus (Rhodopseudomonas capsulata).